The chain runs to 130 residues: Small ribosomal subunit protein uS11c (130 aa).

Belongs to the universal ribosomal protein uS11 family. Part of the 30S ribosomal subunit.

The protein resides in the plastid. It is found in the chloroplast. This Chara vulgaris (Common stonewort) protein is Small ribosomal subunit protein uS11c.